The sequence spans 454 residues: Bifunctional protein GlmU (454 aa).

A pyrophosphorylase region spans residues 1–229 (MQRYAVVLAA…FDEIMGVNDR (229 aa)). UDP-N-acetyl-alpha-D-glucosamine is bound by residues 8 to 11 (LAAG), lysine 22, glutamine 72, and 77 to 78 (GT). Aspartate 102 contacts Mg(2+). UDP-N-acetyl-alpha-D-glucosamine contacts are provided by glycine 139, glutamate 154, and asparagine 227. Residue asparagine 227 participates in Mg(2+) binding. The tract at residues 230–250 (VALSKAEQAMRQRINEYHMRN) is linker. Residues 251–454 (GVTLIDPSST…KPGYLNKNKE (204 aa)) form an N-acetyltransferase region. Residues arginine 332 and lysine 350 each coordinate UDP-N-acetyl-alpha-D-glucosamine. The active-site Proton acceptor is histidine 362. Residues tyrosine 365 and asparagine 376 each contribute to the UDP-N-acetyl-alpha-D-glucosamine site. Residues 385-386 (NY), alanine 422, and arginine 439 each bind acetyl-CoA.

In the N-terminal section; belongs to the N-acetylglucosamine-1-phosphate uridyltransferase family. This sequence in the C-terminal section; belongs to the transferase hexapeptide repeat family. Homotrimer. It depends on Mg(2+) as a cofactor.

Its subcellular location is the cytoplasm. It carries out the reaction alpha-D-glucosamine 1-phosphate + acetyl-CoA = N-acetyl-alpha-D-glucosamine 1-phosphate + CoA + H(+). It catalyses the reaction N-acetyl-alpha-D-glucosamine 1-phosphate + UTP + H(+) = UDP-N-acetyl-alpha-D-glucosamine + diphosphate. Its pathway is nucleotide-sugar biosynthesis; UDP-N-acetyl-alpha-D-glucosamine biosynthesis; N-acetyl-alpha-D-glucosamine 1-phosphate from alpha-D-glucosamine 6-phosphate (route II): step 2/2. The protein operates within nucleotide-sugar biosynthesis; UDP-N-acetyl-alpha-D-glucosamine biosynthesis; UDP-N-acetyl-alpha-D-glucosamine from N-acetyl-alpha-D-glucosamine 1-phosphate: step 1/1. It functions in the pathway bacterial outer membrane biogenesis; LPS lipid A biosynthesis. In terms of biological role, catalyzes the last two sequential reactions in the de novo biosynthetic pathway for UDP-N-acetylglucosamine (UDP-GlcNAc). The C-terminal domain catalyzes the transfer of acetyl group from acetyl coenzyme A to glucosamine-1-phosphate (GlcN-1-P) to produce N-acetylglucosamine-1-phosphate (GlcNAc-1-P), which is converted into UDP-GlcNAc by the transfer of uridine 5-monophosphate (from uridine 5-triphosphate), a reaction catalyzed by the N-terminal domain. This is Bifunctional protein GlmU from Staphylococcus carnosus (strain TM300).